An 84-amino-acid chain; its full sequence is Small ribosomal subunit protein uS17 (84 aa).

This sequence belongs to the universal ribosomal protein uS17 family. In terms of assembly, part of the 30S ribosomal subunit.

One of the primary rRNA binding proteins, it binds specifically to the 5'-end of 16S ribosomal RNA. The polypeptide is Small ribosomal subunit protein uS17 (Sodalis glossinidius (strain morsitans)).